A 309-amino-acid polypeptide reads, in one-letter code: D-alanine--D-alanine ligase (309 aa).

Residues 104-301 (KQIWQGSDLP…FDALCVEILA (198 aa)) form the ATP-grasp domain. Position 130 to 185 (130 to 185 (VASLGLPVIIKPVHEGSSIGMSKVEKIEDFAPAIEKATAHDAIVMAEKWITGREYT)) interacts with ATP. Residues Asp255, Glu268, and Asn270 each contribute to the Mg(2+) site.

It belongs to the D-alanine--D-alanine ligase family. Mg(2+) is required as a cofactor. It depends on Mn(2+) as a cofactor.

Its subcellular location is the cytoplasm. It catalyses the reaction 2 D-alanine + ATP = D-alanyl-D-alanine + ADP + phosphate + H(+). The protein operates within cell wall biogenesis; peptidoglycan biosynthesis. In terms of biological role, cell wall formation. This chain is D-alanine--D-alanine ligase, found in Acinetobacter baylyi (strain ATCC 33305 / BD413 / ADP1).